The sequence spans 56 residues: Endoglucanase Cel5A (56 aa).

Glu45 serves as the catalytic Nucleophile.

Belongs to the glycosyl hydrolase 5 (cellulase A) family.

The protein localises to the secreted. It localises to the extracellular space. It carries out the reaction Endohydrolysis of (1-&gt;4)-beta-D-glucosidic linkages in cellulose, lichenin and cereal beta-D-glucans.. Its function is as follows. Has avicelase and carboxymethylcellulase activity. The protein is Endoglucanase Cel5A of Gloeophyllum trabeum (Brown rot fungus).